We begin with the raw amino-acid sequence, 404 residues long: MKLPIYLDYSATTPVDPRVAEKMMQFLTLDGTFGNPASRSHRFGWQAEEAVDIARNQIAELVGADPREIVFTSGATESDNLAIKGAANFYQKKGKHIITSKTEHKAVLDTCRQLEREGFEVTYLAPQRNGIIDLNELEAAMRDDTILVSIMHVNNEIGVVQDIATIGEMCRARGIIYHVDATQSVGKLPIDLSQLKVDLMSFSGHKIYGPKGIGALYVRRKPRIRIEAQMHGGGHERGMRSGTLPVHQIVGMGEAYRIAKEEMETEMARLRGLRNRLWNGIKDIEEVYLNGDLEQGAPNILNVSFNYVEGESLIMALKDLAVSSGSACTSASLEPSYVLRALGMNDELAHSSIRFSLGRFTTEEEIDYAIDLVRKSIGRLRDLSPLWEMYKQGVDLNSIEWAHH.

Pyridoxal 5'-phosphate-binding positions include 75–76 (AT), Asn155, Gln183, and 203–205 (SGH). Lys206 carries the N6-(pyridoxal phosphate)lysine modification. A pyridoxal 5'-phosphate-binding site is contributed by Thr243. The active-site Cysteine persulfide intermediate is the Cys328. Cys328 provides a ligand contact to [2Fe-2S] cluster.

This sequence belongs to the class-V pyridoxal-phosphate-dependent aminotransferase family. NifS/IscS subfamily. Homodimer. Forms a heterotetramer with IscU, interacts with other sulfur acceptors. The cofactor is pyridoxal 5'-phosphate.

Its subcellular location is the cytoplasm. The enzyme catalyses (sulfur carrier)-H + L-cysteine = (sulfur carrier)-SH + L-alanine. It participates in cofactor biosynthesis; iron-sulfur cluster biosynthesis. In terms of biological role, master enzyme that delivers sulfur to a number of partners involved in Fe-S cluster assembly, tRNA modification or cofactor biosynthesis. Catalyzes the removal of elemental sulfur and selenium atoms from cysteine and selenocysteine to produce alanine. Functions as a sulfur delivery protein for Fe-S cluster synthesis onto IscU, an Fe-S scaffold assembly protein, as well as other S acceptor proteins. Also functions as a selenium delivery protein in the pathway for the biosynthesis of selenophosphate. In Salmonella schwarzengrund (strain CVM19633), this protein is Cysteine desulfurase IscS.